The primary structure comprises 139 residues: Large ribosomal subunit protein bL21 (139 aa).

It belongs to the bacterial ribosomal protein bL21 family. As to quaternary structure, part of the 50S ribosomal subunit. Contacts protein L20.

Functionally, this protein binds to 23S rRNA in the presence of protein L20. This Prochlorococcus marinus (strain NATL2A) protein is Large ribosomal subunit protein bL21.